The following is a 453-amino-acid chain: Ribosomal protein uS12 methylthiotransferase RimO (453 aa).

Residues proline 5–proline 120 form the MTTase N-terminal domain. Residues cysteine 14, cysteine 50, cysteine 79, cysteine 151, cysteine 155, and cysteine 158 each coordinate [4Fe-4S] cluster. Residues leucine 137–asparagine 382 form the Radical SAM core domain. Residues glutamine 385–valine 453 enclose the TRAM domain.

It belongs to the methylthiotransferase family. RimO subfamily. Requires [4Fe-4S] cluster as cofactor.

Its subcellular location is the cytoplasm. It catalyses the reaction L-aspartate(89)-[ribosomal protein uS12]-hydrogen + (sulfur carrier)-SH + AH2 + 2 S-adenosyl-L-methionine = 3-methylsulfanyl-L-aspartate(89)-[ribosomal protein uS12]-hydrogen + (sulfur carrier)-H + 5'-deoxyadenosine + L-methionine + A + S-adenosyl-L-homocysteine + 2 H(+). Functionally, catalyzes the methylthiolation of an aspartic acid residue of ribosomal protein uS12. This Burkholderia lata (strain ATCC 17760 / DSM 23089 / LMG 22485 / NCIMB 9086 / R18194 / 383) protein is Ribosomal protein uS12 methylthiotransferase RimO.